The chain runs to 115 residues: MEKAYRIKKNSDFQAIYRRGKSVANRQFVIYMMPDKGLTHFKLGISVSKKLGNAVTRNRIKRAIRENFKVHKDDMLPRNIIVIARHPAKDMTVLEIQKSLEHVLKVAKLFNKRIK.

Belongs to the RnpA family. In terms of assembly, consists of a catalytic RNA component (M1 or rnpB) and a protein subunit.

It carries out the reaction Endonucleolytic cleavage of RNA, removing 5'-extranucleotides from tRNA precursor.. In terms of biological role, RNaseP catalyzes the removal of the 5'-leader sequence from pre-tRNA to produce the mature 5'-terminus. It can also cleave other RNA substrates such as 4.5S RNA. The protein component plays an auxiliary but essential role in vivo by binding to the 5'-leader sequence and broadening the substrate specificity of the ribozyme. The polypeptide is Ribonuclease P protein component (Staphylococcus carnosus (strain TM300)).